A 43-amino-acid chain; its full sequence is uncharacterized protein (43 aa).

Composition is skewed to polar residues over residues 1-19 (MSQK…SGAS) and 33-43 (PENSISKTFSK). The tract at residues 1–43 (MSQKLSFFQQNTRNGSGASRTLVIKPPTIQPKPENSISKTFSK) is disordered.

This is an uncharacterized protein from Dictyostelium discoideum (Social amoeba).